The primary structure comprises 1256 residues: Bifunctional autolysin (1256 aa).

The signal sequence occupies residues 1 to 29; it reads MAKKFNYKLPSMVALTLVGSAVTAHQVQA. The segment covering 103–138 has biased composition (polar residues); that stretch reads GDTRANQSATTNNTQPVAKSTSTTAPKTNTNVTNAG. Disordered stretches follow at residues 103–151, 172–214, and 419–440; these read GDTR…NSEN, KTAA…KTSL, and TQST…PSTG. Low complexity-rich tracts occupy residues 172 to 196 and 421 to 439; these read KTAA…KVTT and STTT…KPST. Positions 199–775 are N-acetylmuramoyl-L-alanine amidase; sequence ASAQPRSVAA…AVAQPKTAVK (577 aa). GW domains lie at 443 to 517, 519 to 593, 612 to 686, 688 to 762, 784 to 859, 861 to 936, and 943 to 1017; these read TVAA…YNTA, SPVN…DTAK, TVSS…YNNA, SPVN…VPAA, TTQT…VQNL, KEVK…APTA, and AAKD…KELI. Residues 776–1256 form an endo-beta-N-acetylglucosaminidase region; it reads AYTVTKPQTT…GKYFDIPQYK (481 aa).

The protein in the N-terminal section; belongs to the N-acetylmuramoyl-L-alanine amidase 2 family. This sequence in the C-terminal section; belongs to the glycosyl hydrolase 73 family. Oligomer; forms a ring structure at the cell surface which is important for efficient partitioning of daughter cells after cell division. Post-translationally, undergoes proteolytic processing to generate the two extracellular lytic enzymes, probably at the septal region on the cell surface.

Its subcellular location is the secreted. It carries out the reaction Hydrolyzes the link between N-acetylmuramoyl residues and L-amino acid residues in certain cell-wall glycopeptides.. It catalyses the reaction an N(4)-(oligosaccharide-(1-&gt;3)-[oligosaccharide-(1-&gt;6)]-beta-D-Man-(1-&gt;4)-beta-D-GlcNAc-(1-&gt;4)-alpha-D-GlcNAc)-L-asparaginyl-[protein] + H2O = an oligosaccharide-(1-&gt;3)-[oligosaccharide-(1-&gt;6)]-beta-D-Man-(1-&gt;4)-D-GlcNAc + N(4)-(N-acetyl-beta-D-glucosaminyl)-L-asparaginyl-[protein]. Endohydrolysis of the di-N-acetylchitobiosyl unit in high-mannose glycopeptides and glycoproteins containing the -[(Man)5(GlcNAc)2]-Asn structure. One N-acetyl-D-glucosamine residue remains attached to the protein; the rest of the oligosaccharide is released intact. Cleaves the peptidoglycan connecting the daughter cells at the end of the cell division cycle, resulting in the separation of the two newly divided cells. Acts as an autolysin in penicillin-induced lysis. This chain is Bifunctional autolysin (atl), found in Staphylococcus aureus (strain NCTC 8325 / PS 47).